We begin with the raw amino-acid sequence, 180 residues long: Probable nicotinate-nucleotide adenylyltransferase (180 aa).

The protein belongs to the NadD family.

The catalysed reaction is nicotinate beta-D-ribonucleotide + ATP + H(+) = deamido-NAD(+) + diphosphate. It participates in cofactor biosynthesis; NAD(+) biosynthesis; deamido-NAD(+) from nicotinate D-ribonucleotide: step 1/1. Its function is as follows. Catalyzes the reversible adenylation of nicotinate mononucleotide (NaMN) to nicotinic acid adenine dinucleotide (NaAD). In Pelagibacter ubique (strain HTCC1062), this protein is Probable nicotinate-nucleotide adenylyltransferase.